The sequence spans 84 residues: Cell division topological specificity factor (84 aa).

The protein belongs to the MinE family.

Functionally, prevents the cell division inhibition by proteins MinC and MinD at internal division sites while permitting inhibition at polar sites. This ensures cell division at the proper site by restricting the formation of a division septum at the midpoint of the long axis of the cell. In Cupriavidus metallidurans (strain ATCC 43123 / DSM 2839 / NBRC 102507 / CH34) (Ralstonia metallidurans), this protein is Cell division topological specificity factor.